The chain runs to 193 residues: MRLCDHDIERWLDEKKLTITPRPPAKHINGATVDIRLGHEFRVFVGHKAPFIDLSAPKEEINHALDQIMSDKIVLKEKECFFLHPGELALAVTLESVTIPDDLVGWLDGRSSLARLGLMVHVTAHRIDPGWRGQIVLEFYNSGKLPLGLRPGMLIGALSFELLSGQAKRPYHQRQDAKYHNQKGAVASRIDKD.

DCTP contacts are provided by residues 110–115 (RSSLAR), aspartate 128, 136–138 (VLE), tyrosine 171, lysine 178, and glutamine 182. The active-site Proton donor/acceptor is glutamate 138. Positions 171–193 (YHQRQDAKYHNQKGAVASRIDKD) are disordered.

The protein belongs to the dCTP deaminase family. Homotrimer.

The catalysed reaction is dCTP + H2O + H(+) = dUTP + NH4(+). It participates in pyrimidine metabolism; dUMP biosynthesis; dUMP from dCTP (dUTP route): step 1/2. In terms of biological role, catalyzes the deamination of dCTP to dUTP. This chain is dCTP deaminase, found in Hamiltonella defensa subsp. Acyrthosiphon pisum (strain 5AT).